Consider the following 710-residue polypeptide: Polyribonucleotide nucleotidyltransferase (710 aa).

Residues Asp-489 and Asp-495 each contribute to the Mg(2+) site. In terms of domain architecture, KH spans Pro-556–Ile-615. One can recognise an S1 motif domain in the interval Gly-625–Lys-693.

It belongs to the polyribonucleotide nucleotidyltransferase family. Mg(2+) serves as cofactor.

It is found in the cytoplasm. The catalysed reaction is RNA(n+1) + phosphate = RNA(n) + a ribonucleoside 5'-diphosphate. Functionally, involved in mRNA degradation. Catalyzes the phosphorolysis of single-stranded polyribonucleotides processively in the 3'- to 5'-direction. The protein is Polyribonucleotide nucleotidyltransferase of Streptococcus pyogenes serotype M3 (strain ATCC BAA-595 / MGAS315).